Reading from the N-terminus, the 1370-residue chain is Zinc finger MYM-type protein 3 (1370 aa).

Low complexity-rich tracts occupy residues 1–12 (MDPSDFPSPFDP), 40–56 (APSR…SSGA), and 130–146 (GAGA…EPLA). 2 disordered regions span residues 1–73 (MDPS…PGGV) and 85–310 (GLLY…MGTK). The span at 227–255 (TGKEIEKPPERVQKRSERVRRAEPPKPEV) shows a compositional bias: basic and acidic residues. Residues Ser-265 and Ser-269 each carry the phosphoserine modification. A compositionally biased stretch (acidic residues) spans 265–281 (SDEDSDAMVDDPNDEDF). Glycyl lysine isopeptide (Lys-Gly) (interchain with G-Cter in SUMO2) cross-links involve residues Lys-310, Lys-322, and Lys-330. 9 consecutive MYM-type zinc fingers follow at residues 334–368 (QLFC…TKDS), 380–424 (HEFC…LHEV), 431–466 (HRLC…RPGG), 479–513 (KRFC…FEML), 523–561 (SLFC…PCYY), 569–606 (YQFC…KPEV), 614–648 (FQFC…HEKL), 655–694 (KSFC…GVTE), and 701–735 (WDFC…LETI). Over residues 761–789 (NLDTQSGPESLLNSQSSESKPQTPSQTKV) the composition is skewed to polar residues. The disordered stretch occupies residues 761–831 (NLDTQSGPES…PPPPATPRKN (71 aa)). Residues Lys-780 and Lys-788 each participate in a glycyl lysine isopeptide (Lys-Gly) (interchain with G-Cter in SUMO2) cross-link. Positions 790–799 (ENNHTVRTPD) are enriched in basic and acidic residues. Thr-797 is modified (phosphothreonine). A Glycyl lysine isopeptide (Lys-Gly) (interchain with G-Cter in SUMO2) cross-link involves residue Lys-806. Positions 816 to 827 (VPTPPPPPPPAT) are enriched in pro residues. 2 positions are modified to phosphothreonine: Thr-818 and Thr-827. Residues Lys-848, Lys-862, Lys-921, and Lys-1276 each participate in a glycyl lysine isopeptide (Lys-Gly) (interchain with G-Cter in SUMO2) cross-link.

In terms of assembly, may be a component of a BHC histone deacetylase complex that contains HDAC1, HDAC2, HMG20B/BRAF35, KDM1A, RCOR1/CoREST, PHF21A/BHC80, ZMYM2, ZNF217, ZMYM3, GSE1 and GTF2I. In terms of tissue distribution, ubiquitously expressed in all embryonic stages and adult tissues.

It is found in the nucleus. In terms of biological role, plays a role in the regulation of cell morphology and cytoskeletal organization. The polypeptide is Zinc finger MYM-type protein 3 (Zmym3) (Mus musculus (Mouse)).